The sequence spans 205 residues: uncharacterized protein (205 aa).

The first 40 residues, 1 to 40, serve as a signal peptide directing secretion; sequence MSAGKSYRKKMKQRRMNMKISKYALGILMLSLVFVLSACG. The tract at residues 44–82 is disordered; sequence STKESTHDNHSDSSTHEEMDHSGSADVPEGLQESKNPKY. Positions 47 to 66 are enriched in basic and acidic residues; that stretch reads ESTHDNHSDSSTHEEMDHSG.

This is an uncharacterized protein from Bacillus subtilis (strain 168).